The following is an 888-amino-acid chain: Alanine--tRNA ligase (888 aa).

The Zn(2+) site is built by histidine 573, histidine 577, cysteine 676, and histidine 680.

This sequence belongs to the class-II aminoacyl-tRNA synthetase family. Zn(2+) serves as cofactor.

It is found in the cytoplasm. The catalysed reaction is tRNA(Ala) + L-alanine + ATP = L-alanyl-tRNA(Ala) + AMP + diphosphate. Catalyzes the attachment of alanine to tRNA(Ala) in a two-step reaction: alanine is first activated by ATP to form Ala-AMP and then transferred to the acceptor end of tRNA(Ala). Also edits incorrectly charged Ser-tRNA(Ala) and Gly-tRNA(Ala) via its editing domain. This chain is Alanine--tRNA ligase, found in Corynebacterium glutamicum (strain ATCC 13032 / DSM 20300 / JCM 1318 / BCRC 11384 / CCUG 27702 / LMG 3730 / NBRC 12168 / NCIMB 10025 / NRRL B-2784 / 534).